We begin with the raw amino-acid sequence, 322 residues long: RNA pseudouridine synthase 1 (322 aa).

D120 is an active-site residue.

It belongs to the pseudouridine synthase RluA family.

It catalyses the reaction a uridine in RNA = a pseudouridine in RNA. The sequence is that of RNA pseudouridine synthase 1 from Arabidopsis thaliana (Mouse-ear cress).